The chain runs to 152 residues: Transposase for insertion sequence element IS200 (152 aa).

2 residues coordinate Mg(2+): His61 and His63. The active-site Nucleophile is Tyr125. Residue Gln129 participates in Mg(2+) binding.

This sequence belongs to the transposase 17 family. Homodimer. Mg(2+) is required as a cofactor.

Transposase responsible for transposition of the IS200 insertion sequence (IS) element. Transposition occurs in 2 main steps, excision from the donor DNA 'top strand' into a single strand circle and its subsequent reinsertion into the DNA target. This increases the copy number of the IS. In Salmonella typhi, this protein is Transposase for insertion sequence element IS200 (tnpA1).